The primary structure comprises 597 residues: Elongation factor 4 (597 aa).

One can recognise a tr-type G domain in the interval 2–184; that stretch reads KHIRNFSIIA…TIVKSIPAPE (183 aa). GTP is bound by residues 14 to 19 and 131 to 134; these read DHGKST and NKID.

This sequence belongs to the TRAFAC class translation factor GTPase superfamily. Classic translation factor GTPase family. LepA subfamily.

Its subcellular location is the cell inner membrane. The enzyme catalyses GTP + H2O = GDP + phosphate + H(+). Functionally, required for accurate and efficient protein synthesis under certain stress conditions. May act as a fidelity factor of the translation reaction, by catalyzing a one-codon backward translocation of tRNAs on improperly translocated ribosomes. Back-translocation proceeds from a post-translocation (POST) complex to a pre-translocation (PRE) complex, thus giving elongation factor G a second chance to translocate the tRNAs correctly. Binds to ribosomes in a GTP-dependent manner. This chain is Elongation factor 4, found in Aliivibrio fischeri (strain ATCC 700601 / ES114) (Vibrio fischeri).